A 339-amino-acid polypeptide reads, in one-letter code: Dual specificity protein phosphatase 12 (339 aa).

Met-1 is subject to N-acetylmethionine. Positions 1–25 (MLEAQGSNHGCERQAPTASPASSAG) are disordered. A Tyrosine-protein phosphatase domain is found at 26–170 (HAVEVRPGLY…LKLYEAMGYE (145 aa)). Cys-114 acts as the Phosphocysteine intermediate in catalysis. Residue 115-120 (HAGVSR) participates in substrate binding. Ser-334 carries the phosphoserine modification.

It belongs to the protein-tyrosine phosphatase family. Non-receptor class dual specificity subfamily. In terms of assembly, monomer. Zn(2+) serves as cofactor.

The protein resides in the nucleus. It localises to the cytoplasm. The protein localises to the cytosol. It catalyses the reaction O-phospho-L-tyrosyl-[protein] + H2O = L-tyrosyl-[protein] + phosphate. It carries out the reaction O-phospho-L-seryl-[protein] + H2O = L-seryl-[protein] + phosphate. The enzyme catalyses O-phospho-L-threonyl-[protein] + H2O = L-threonyl-[protein] + phosphate. Functionally, dual specificity phosphatase; can dephosphorylate both phosphotyrosine and phosphoserine or phosphothreonine residues. Can dephosphorylate glucokinase (in vitro). Has phosphatase activity with the synthetic substrate 6,8-difluoro-4-methylumbelliferyl phosphate and other in vitro substrates. The chain is Dual specificity protein phosphatase 12 (Dusp12) from Mus musculus (Mouse).